The chain runs to 446 residues: C-type lectin domain family 18 member C (446 aa).

The signal sequence occupies residues 1–26; that stretch reads MLHPETSPGRGHLLAVLLALLGTAWA. Residues 52–182 enclose the SCP domain; the sequence is LSLHNRLRSW…AAIEAFVCAY (131 aa). Asparagine 144 carries an N-linked (GlcNAc...) asparagine glycan. The region spanning 228–261 is the EGF-like domain; the sequence is PRNPCRMSCQNHGRLNISTCHCHCPPGYTGRYCQ. Disulfide bonds link cysteine 236-cysteine 249, cysteine 251-cysteine 260, cysteine 327-cysteine 432, and cysteine 408-cysteine 424. Residues 306–433 enclose the C-type lectin domain; sequence IDGDCFMVSS…CKTRNRYICQ (128 aa).

As to expression, detected in peripheral blood cells.

Its subcellular location is the secreted. It is found in the endoplasmic reticulum. The protein localises to the golgi apparatus. It localises to the endosome. In terms of biological role, binds polysaccharidesin a Ca(2+)-independent manner with a preferentially binding to fucoidan, beta-glucans and galactans. The sequence is that of C-type lectin domain family 18 member C (CLEC18C) from Homo sapiens (Human).